The sequence spans 23 residues: GLLQTIKEKLKELATGLVIGVQS.

Belongs to the frog skin active peptide (FSAP) family. Aurein subfamily. In terms of tissue distribution, expressed by the skin dorsal glands.

The protein localises to the secreted. Its function is as follows. Has no antimicrobial or anticancer activity. The protein is Aurein-4.4 of Ranoidea aurea (Green and golden bell frog).